A 213-amino-acid chain; its full sequence is Ras-related protein Rab-4B (213 aa).

Alanine 2 bears the N-acetylalanine mark. GDP is bound by residues glycine 18, threonine 19, glycine 20, lysine 21, serine 22, and cysteine 23. 9 residues coordinate GTP: glycine 18, threonine 19, glycine 20, lysine 21, serine 22, cysteine 23, serine 37, histidine 39, and threonine 40. Serine 22 serves as a coordination point for Mg(2+). Residues 39 to 44 (HTIGVE) carry the Switch 1 motif. 2 residues coordinate Mg(2+): threonine 40 and aspartate 63. The Switch 2 signature appears at 65–74 (AGQERFRSVT). Glycine 66 contributes to the GTP binding site. 5-glutamyl serotonin is present on glutamine 67. Asparagine 121, lysine 122, aspartate 124, alanine 152, and leucine 153 together coordinate GDP. GTP-binding residues include asparagine 121, lysine 122, aspartate 124, alanine 152, and leucine 153. Phosphoserine occurs at positions 185 and 193. Residues cysteine 211 and cysteine 213 are each lipidated (S-geranylgeranyl cysteine). Cysteine 213 carries the post-translational modification Cysteine methyl ester.

The protein belongs to the small GTPase superfamily. Rab family. Interacts (GTP-bound form) with RUFY1; the interaction allows endosomal tethering and fusion. It depends on Mg(2+) as a cofactor. Serotonylation of Gln-67 by TGM2 during activation and aggregation of platelets leads to constitutive activation of GTPase activity.

It is found in the cell membrane. The protein resides in the early endosome membrane. It catalyses the reaction GTP + H2O = GDP + phosphate + H(+). With respect to regulation, regulated by guanine nucleotide exchange factors (GEFs) which promote the exchange of bound GDP for free GTP. Regulated by GTPase activating proteins (GAPs) which increase the GTP hydrolysis activity. Inhibited by GDP dissociation inhibitors (GDIs). Functionally, the small GTPases Rab are key regulators of intracellular membrane trafficking, from the formation of transport vesicles to their fusion with membranes. Rabs cycle between an inactive GDP-bound form and an active GTP-bound form that is able to recruit to membranes different set of downstream effectors directly responsible for vesicle formation, movement, tethering and fusion. RAB4B mediates endosomal tethering and fusion through the interaction with RUFY1 and RAB14. Acts as a regulator of platelet alpha-granule release during activation and aggregation of platelets. The sequence is that of Ras-related protein Rab-4B from Homo sapiens (Human).